Consider the following 197-residue polypeptide: Imidazoleglycerol-phosphate dehydratase (197 aa).

Belongs to the imidazoleglycerol-phosphate dehydratase family.

Its subcellular location is the cytoplasm. It catalyses the reaction D-erythro-1-(imidazol-4-yl)glycerol 3-phosphate = 3-(imidazol-4-yl)-2-oxopropyl phosphate + H2O. It participates in amino-acid biosynthesis; L-histidine biosynthesis; L-histidine from 5-phospho-alpha-D-ribose 1-diphosphate: step 6/9. The protein is Imidazoleglycerol-phosphate dehydratase of Pseudomonas entomophila (strain L48).